The sequence spans 486 residues: 23S rRNA (uracil(1939)-C(5))-methyltransferase RlmD (486 aa).

The region spanning 10–71 (TVKAPEYLPD…SSFEKAVVMA (62 aa)) is the TRAM domain. The [4Fe-4S] cluster site is built by Cys84, Cys94, Cys97, and Cys176. S-adenosyl-L-methionine-binding residues include Gln285, Phe314, Asn319, Glu335, Asn370, and Asp391. The active-site Nucleophile is the Cys442.

The protein belongs to the class I-like SAM-binding methyltransferase superfamily. RNA M5U methyltransferase family. RlmD subfamily.

The enzyme catalyses uridine(1939) in 23S rRNA + S-adenosyl-L-methionine = 5-methyluridine(1939) in 23S rRNA + S-adenosyl-L-homocysteine + H(+). Its function is as follows. Catalyzes the formation of 5-methyl-uridine at position 1939 (m5U1939) in 23S rRNA. This Polaromonas sp. (strain JS666 / ATCC BAA-500) protein is 23S rRNA (uracil(1939)-C(5))-methyltransferase RlmD.